The chain runs to 182 residues: Nucleoside-triphosphatase THEP1 (182 aa).

ATP is bound by residues 10–17 (GRPGIGKT) and 102–109 (VVVIDEIG).

It belongs to the THEP1 NTPase family.

It carries out the reaction a ribonucleoside 5'-triphosphate + H2O = a ribonucleoside 5'-diphosphate + phosphate + H(+). Functionally, has nucleotide phosphatase activity towards ATP, GTP, CTP, TTP and UTP. May hydrolyze nucleoside diphosphates with lower efficiency. The protein is Nucleoside-triphosphatase THEP1 of Thermofilum pendens (strain DSM 2475 / Hrk 5).